A 356-amino-acid polypeptide reads, in one-letter code: Glutamine synthetase nodule isozyme (356 aa).

The GS beta-grasp domain occupies 19-99 (IIAEYIWVGG…VICDVYTPAG (81 aa)). Positions 106-356 (KRHNAAKIFS…IAETTLLWKP (251 aa)) constitute a GS catalytic domain.

It belongs to the glutamine synthetase family. As to quaternary structure, homooctamer. As to expression, found at highest levels in root nodules.

The protein resides in the cytoplasm. It catalyses the reaction L-glutamate + NH4(+) + ATP = L-glutamine + ADP + phosphate + H(+). The chain is Glutamine synthetase nodule isozyme (GS1) from Medicago sativa (Alfalfa).